Consider the following 160-residue polypeptide: Cytochrome b6-f complex subunit 4 (160 aa).

3 helical membrane passes run 36–56, 95–115, and 128–148; these read LLYIFPVVILGTIACIVGLSV, LLGIALQTLVPLGLMLIPFIE, and IAMAVFLFGTATTIYLGIGAA.

The protein belongs to the cytochrome b family. PetD subfamily. The 4 large subunits of the cytochrome b6-f complex are cytochrome b6, subunit IV (17 kDa polypeptide, PetD), cytochrome f and the Rieske protein, while the 4 small subunits are PetG, PetL, PetM and PetN. The complex functions as a dimer.

The protein resides in the cellular thylakoid membrane. Its function is as follows. Component of the cytochrome b6-f complex, which mediates electron transfer between photosystem II (PSII) and photosystem I (PSI), cyclic electron flow around PSI, and state transitions. The sequence is that of Cytochrome b6-f complex subunit 4 from Synechococcus sp. (strain CC9311).